The sequence spans 717 residues: uncharacterized protein (717 aa).

Belongs to the asfivirus C717R family.

It is found in the virion. This is an uncharacterized protein from African swine fever virus (strain Badajoz 1971 Vero-adapted) (Ba71V).